The sequence spans 505 residues: ATP synthase subunit alpha (505 aa).

171–178 (GDRQTGKT) is a binding site for ATP.

The protein belongs to the ATPase alpha/beta chains family. F-type ATPases have 2 components, CF(1) - the catalytic core - and CF(0) - the membrane proton channel. CF(1) has five subunits: alpha(3), beta(3), gamma(1), delta(1), epsilon(1). CF(0) has three main subunits: a(1), b(2) and c(9-12). The alpha and beta chains form an alternating ring which encloses part of the gamma chain. CF(1) is attached to CF(0) by a central stalk formed by the gamma and epsilon chains, while a peripheral stalk is formed by the delta and b chains.

The protein resides in the cell inner membrane. It carries out the reaction ATP + H2O + 4 H(+)(in) = ADP + phosphate + 5 H(+)(out). Functionally, produces ATP from ADP in the presence of a proton gradient across the membrane. The alpha chain is a regulatory subunit. The chain is ATP synthase subunit alpha from Nitratiruptor sp. (strain SB155-2).